A 134-amino-acid polypeptide reads, in one-letter code: Complexin-2 (134 aa).

A disordered region spans residues 1–114 (MDFVMKQALG…CGDEDEEDEE (114 aa)). Positions 15–85 (DMGKMLGGDE…EEKEAEEKAA (71 aa)) are enriched in basic and acidic residues. Positions 29 to 84 (DAQKKEEERQEALRQQEDERKQKHIRMETEREKVRQQIRDKYGLKKKEEKEAEEKA) form a coiled coil.

It belongs to the complexin/synaphin family. As to quaternary structure, binds to the SNARE core complex containing SNAP25, VAMP2 and STX1A. Nervous system. Present in electric organ (at protein level).

Its subcellular location is the cytoplasm. The protein resides in the cytosol. It is found in the presynapse. The protein localises to the nucleus. It localises to the perikaryon. Its function is as follows. Positively regulates a late step in synaptic vesicle exocytosis. In Narke japonica (Japanese sleeper ray), this protein is Complexin-2.